Reading from the N-terminus, the 287-residue chain is Probable endoribonuclease YicC (287 aa).

This sequence belongs to the YicC/YloC family. It depends on a divalent metal cation as a cofactor.

Its function is as follows. Probably a ssRNA endonuclease. Might contribute to small RNA (sRNA) regulation. The polypeptide is Probable endoribonuclease YicC (Salmonella typhimurium (strain LT2 / SGSC1412 / ATCC 700720)).